We begin with the raw amino-acid sequence, 703 residues long: Probable ATP-dependent RNA helicase DHX35 (703 aa).

The region spanning 64 to 229 is the Helicase ATP-binding domain; that stretch reads LYLIENYQTV…FNQNETSDPA (166 aa). 77–84 lines the ATP pocket; the sequence is GETGCGKS. A DEAH box motif is present at residues 176 to 179; the sequence is DEAH. Residues 261 to 438 enclose the Helicase C-terminal domain; it reads TVETVVKIHQ…PVILQLKALG (178 aa).

This sequence belongs to the DEAD box helicase family. DEAH subfamily. In terms of assembly, identified in the spliceosome C complex.

The catalysed reaction is ATP + H2O = ADP + phosphate + H(+). Its function is as follows. May be involved in pre-mRNA splicing. In Homo sapiens (Human), this protein is Probable ATP-dependent RNA helicase DHX35 (DHX35).